The chain runs to 425 residues: Kynurenine/alpha-aminoadipate aminotransferase, mitochondrial (425 aa).

The transit peptide at 1–29 directs the protein to the mitochondrion; it reads MNYSRFLTATSLARKTSPIRATVEIMSRA. Arginine 20 serves as a coordination point for substrate. Serine 40 is modified (phosphoserine). Substrate-binding residues include tyrosine 74 and tyrosine 142. Lysine 172 bears the N6-succinyllysine mark. Position 179 is an N6-acetyllysine (lysine 179). Residues 179-188 are compositionally biased toward basic and acidic residues; it reads KPEDSKDPTK. Positions 179 to 208 are disordered; it reads KPEDSKDPTKRTPKFLYTIPNGNNPTGNSL. The span at 198–208 shows a compositional bias: polar residues; sequence PNGNNPTGNSL. Asparagine 202 contributes to the substrate binding site. Lysine 263 carries the post-translational modification N6-(pyridoxal phosphate)lysine; alternate. An N6-acetyllysine; alternate mark is found at lysine 263 and lysine 339. N6-succinyllysine; alternate is present on residues lysine 263 and lysine 339. Lysine 351 bears the N6-acetyllysine mark. Residue lysine 367 is modified to N6-acetyllysine; alternate. At lysine 367 the chain carries N6-succinyllysine; alternate. Arginine 399 serves as a coordination point for substrate. Residue lysine 422 is modified to N6-acetyllysine.

This sequence belongs to the class-I pyridoxal-phosphate-dependent aminotransferase family. In terms of assembly, homodimer. Pyridoxal 5'-phosphate serves as cofactor. The N-terminus is blocked.

It is found in the mitochondrion. It carries out the reaction L-kynurenine + 2-oxoglutarate = kynurenate + L-glutamate + H2O. It catalyses the reaction L-2-aminoadipate + 2-oxoglutarate = 2-oxoadipate + L-glutamate. The catalysed reaction is glycine + 2-oxoglutarate = glyoxylate + L-glutamate. The enzyme catalyses L-kynurenine + glyoxylate = kynurenate + glycine + H2O. It carries out the reaction 3-hydroxy-L-kynurenine + glyoxylate = xanthurenate + glycine + H2O. It catalyses the reaction 2-oxohexanoate + L-kynurenine = L-2-aminohexanoate + kynurenate + H2O. The catalysed reaction is 3-phenylpyruvate + L-kynurenine = kynurenate + L-phenylalanine + H2O. The enzyme catalyses 4-methylsulfanyl-2-oxobutanoate + L-kynurenine = kynurenate + L-methionine + H2O. It carries out the reaction 2-oxo-3-sulfanylpropanoate + L-kynurenine = kynurenate + L-cysteine + H2O. It catalyses the reaction indole-3-pyruvate + L-kynurenine = kynurenate + L-tryptophan + H2O. The catalysed reaction is 2-oxopentanoate + L-kynurenine = L-2-aminopentanoate + kynurenate + H2O. The enzyme catalyses 4-methyl-2-oxopentanoate + L-kynurenine = kynurenate + L-leucine + H2O. It carries out the reaction glyoxylate + L-methionine = 4-methylsulfanyl-2-oxobutanoate + glycine. It catalyses the reaction L-2-aminoadipate + glyoxylate = 2-oxoadipate + glycine. The catalysed reaction is L-tyrosine + glyoxylate = 3-(4-hydroxyphenyl)pyruvate + glycine. The enzyme catalyses glyoxylate + L-phenylalanine = 3-phenylpyruvate + glycine. It carries out the reaction L-tryptophan + glyoxylate = indole-3-pyruvate + glycine. It catalyses the reaction L-leucine + glyoxylate = 4-methyl-2-oxopentanoate + glycine. The catalysed reaction is 2-oxobutanoate + L-kynurenine = (2S)-2-aminobutanoate + kynurenate + H2O. The enzyme catalyses 2-oxoadipate + L-kynurenine = L-2-aminoadipate + kynurenate + H2O. It carries out the reaction 2-oxoadipate + L-kynurenine = 4-(2-aminophenyl)-2,4-dioxobutanoate + L-2-aminoadipate. It functions in the pathway amino-acid degradation; L-lysine degradation via saccharopine pathway; glutaryl-CoA from L-lysine: step 4/6. Transaminase with broad substrate specificity. Has transaminase activity towards aminoadipate, kynurenine, methionine and glutamate. Shows activity also towards tryptophan, aspartate and hydroxykynurenine. Accepts a variety of oxo-acids as amino-group acceptors, with a preference for 2-oxoglutarate, 2-oxocaproic acid, phenylpyruvate and alpha-oxo-gamma-methiol butyric acid. Can also use glyoxylate as amino-group acceptor (in vitro). The polypeptide is Kynurenine/alpha-aminoadipate aminotransferase, mitochondrial (Rattus norvegicus (Rat)).